Consider the following 289-residue polypeptide: Rhodopsin (289 aa).

Over Y1–A7 the chain is Extracellular. Residues Y8–V32 form a helical membrane-spanning segment. Residues T33 to N44 lie on the Cytoplasmic side of the membrane. Residues Y45–Y67 form a helical membrane-spanning segment. The Extracellular segment spans residues T68–C81. Cysteines 81 and 158 form a disulfide. The chain crosses the membrane as a helical span at residues N82–I104. A 'Ionic lock' involved in activated form stabilization motif is present at residues E105–W107. The Cytoplasmic portion of the chain corresponds to E105–N123. A helical membrane pass occupies residues A124 to V144. Residues G145–S173 are Extracellular-facing. N171 carries an N-linked (GlcNAc...) asparagine glycan. The helical transmembrane segment at F174 to G195 threads the bilayer. At R196–R223 the chain is on the cytoplasmic side. Residues M224 to W245 traverse the membrane as a helical segment. Topologically, residues I246–I257 are extracellular. Residues F258–C279 traverse the membrane as a helical segment. At K267 the chain carries N6-(retinylidene)lysine. Over M280 to I289 the chain is Cytoplasmic.

This sequence belongs to the G-protein coupled receptor 1 family. Opsin subfamily. Post-translationally, phosphorylated on some or all of the serine and threonine residues present in the C-terminal region. Contains one covalently linked retinal chromophore.

It localises to the membrane. The protein localises to the cell projection. It is found in the cilium. The protein resides in the photoreceptor outer segment. In terms of biological role, photoreceptor required for image-forming vision at low light intensity. While most salt water fish species use retinal as chromophore, most freshwater fish use 3-dehydroretinal, or a mixture of retinal and 3-dehydroretinal. Light-induced isomerization of 11-cis to all-trans retinal triggers a conformational change that activates signaling via G-proteins. Subsequent receptor phosphorylation mediates displacement of the bound G-protein alpha subunit by arrestin and terminates signaling. The sequence is that of Rhodopsin (rho) from Batrachocottus nikolskii (Fat sculpin).